We begin with the raw amino-acid sequence, 69 residues long: Protein translocase subunit SecE (69 aa).

A helical transmembrane segment spans residues 43-63 (GLGICLLGFVGFVIHVPITYL).

This sequence belongs to the SecE/SEC61-gamma family. As to quaternary structure, component of the Sec protein translocase complex. Heterotrimer consisting of SecY (alpha), SecG (beta) and SecE (gamma) subunits. The heterotrimers can form oligomers, although 1 heterotrimer is thought to be able to translocate proteins. Interacts with the ribosome. May interact with SecDF, and other proteins may be involved.

The protein localises to the cell membrane. Functionally, essential subunit of the Sec protein translocation channel SecYEG. Clamps together the 2 halves of SecY. May contact the channel plug during translocation. The sequence is that of Protein translocase subunit SecE from Methanococcus maripaludis (strain DSM 14266 / JCM 13030 / NBRC 101832 / S2 / LL).